The following is a 371-amino-acid chain: MYNETPIKRRPSTRIYVGNVPIGDGAPIAVQSMTNTKTTDVEATVAQIRALEKVGADIVRVSVPTMDAAEAFKVIKQSVSVPLVADIHFDYRIALKVAEYGVDCLRINPGNIGNEERIRSVVECARDKNIPIRIGVNGGSLEKDLMDKYKEPTPEALLESAMRHVDILDRLNFDQFKVSVKASDVFLAVESYRLLAKQIRQPLHLGITEAGGARAGAVKSAVGLGMLLAEGIGDTLRISLAADPVEEIKVGFDILKSLRIRSRGINFIACPSCSRQEFDVISTVNELERRLEDVTTAMDVSIIGCVVNGPGEALVSHIGLTGGHRKSGYYDEGERQKERFDNDNLVDSLEAKIRAKASQMANRIQVKDTTE.

Residues Cys-270, Cys-273, Cys-305, and Glu-312 each contribute to the [4Fe-4S] cluster site.

This sequence belongs to the IspG family. It depends on [4Fe-4S] cluster as a cofactor.

The enzyme catalyses (2E)-4-hydroxy-3-methylbut-2-enyl diphosphate + oxidized [flavodoxin] + H2O + 2 H(+) = 2-C-methyl-D-erythritol 2,4-cyclic diphosphate + reduced [flavodoxin]. It functions in the pathway isoprenoid biosynthesis; isopentenyl diphosphate biosynthesis via DXP pathway; isopentenyl diphosphate from 1-deoxy-D-xylulose 5-phosphate: step 5/6. In terms of biological role, converts 2C-methyl-D-erythritol 2,4-cyclodiphosphate (ME-2,4cPP) into 1-hydroxy-2-methyl-2-(E)-butenyl 4-diphosphate. This Shewanella sp. (strain ANA-3) protein is 4-hydroxy-3-methylbut-2-en-1-yl diphosphate synthase (flavodoxin).